Consider the following 149-residue polypeptide: Deoxyuridine 5'-triphosphate nucleotidohydrolase (149 aa).

Substrate contacts are provided by residues arginine 68–glycine 70, asparagine 81, leucine 85–aspartate 87, and methionine 95.

The protein belongs to the dUTPase family. Mg(2+) serves as cofactor.

The enzyme catalyses dUTP + H2O = dUMP + diphosphate + H(+). It participates in pyrimidine metabolism; dUMP biosynthesis; dUMP from dCTP (dUTP route): step 2/2. In terms of biological role, this enzyme is involved in nucleotide metabolism: it produces dUMP, the immediate precursor of thymidine nucleotides and it decreases the intracellular concentration of dUTP so that uracil cannot be incorporated into DNA. In Polynucleobacter asymbioticus (strain DSM 18221 / CIP 109841 / QLW-P1DMWA-1) (Polynucleobacter necessarius subsp. asymbioticus), this protein is Deoxyuridine 5'-triphosphate nucleotidohydrolase.